The chain runs to 343 residues: MDGDLRGDTVHIGGDARQRFHDARGYGYPLGGNDIAVSLVEAAHLLFRGDLDSVDGMGFRAFLTDREAGFAARFLVYVDLRDRGFYLVPDRDPWWRDPGDGDFVVFPRGNTRRDGVVKHRVRVVDERTTLPVDGLSESVLAVVDEESEITYLDIAPETPTGETTLDRPTDVPGVLLDDRVLVWEPPQRLHNAGFYGQPLGGRAADHDALQLSLVEAAYLIDAGVLRLTDATIDDVRARGRLGEGEHFDCRLAVYRALRDAGAVPKTGFKFGADFRVYSAVSSVDDLGHSELLVRVITDTHVFSPGDLSLDVRLAHGVRKRMVFAATDDTDDTIRWLSVSRLTP.

Residues Tyr-277, His-288, and Lys-319 contribute to the active site.

It belongs to the tRNA-intron endonuclease family. Archaeal long subfamily. In terms of assembly, homodimer.

The enzyme catalyses pretRNA = a 3'-half-tRNA molecule with a 5'-OH end + a 5'-half-tRNA molecule with a 2',3'-cyclic phosphate end + an intron with a 2',3'-cyclic phosphate and a 5'-hydroxyl terminus.. In terms of biological role, endonuclease that removes tRNA introns. Cleaves pre-tRNA at the 5' and 3' splice sites to release the intron. The products are an intron and two tRNA half-molecules bearing 2',3' cyclic phosphate and 5'-OH termini. Recognizes a pseudosymmetric substrate in which 2 bulged loops of 3 bases are separated by a stem of 4 bp. This Halobacterium salinarum (strain ATCC 29341 / DSM 671 / R1) protein is tRNA-splicing endonuclease.